The following is a 1836-amino-acid chain: U3 small nucleolar RNA-associated protein 10 (1836 aa).

An HEAT 1 repeat occupies 245–283 (EVVGFLLLPSKYETLRNIDVDTRLTAYSIIAVLASIIPI). The segment at 453 to 473 (SNSSVRDSDDVEFDAGEEDNN) is disordered. The span at 461–473 (DDVEFDAGEEDNN) shows a compositional bias: acidic residues. HEAT repeat units follow at residues 585-623 (PLDL…TTTS) and 813-850 (VENR…DQDL). The tract at residues 863–883 (QIPEQGPAKRRRRSSSSTKQA) is disordered. A run of 2 helical transmembrane segments spans residues 998–1018 (LLLV…HSVM) and 1085–1105 (LFTY…LLFL). HEAT repeat units lie at residues 1333–1372 (ESVL…KFGA), 1749–1787 (ETLV…KMGE), and 1790–1828 (LTYL…NVLG).

The protein belongs to the HEATR1/UTP10 family. In terms of assembly, component of the ribosomal small subunit (SSU) processome.

The protein localises to the nucleus. The protein resides in the nucleolus. It localises to the membrane. Functionally, involved in nucleolar processing of pre-18S ribosomal RNA. Involved in ribosome biosynthesis. In Scheffersomyces stipitis (strain ATCC 58785 / CBS 6054 / NBRC 10063 / NRRL Y-11545) (Yeast), this protein is U3 small nucleolar RNA-associated protein 10.